The chain runs to 283 residues: Daunorubicin resistance ABC transporter permease protein DrrB1 (283 aa).

One can recognise an ABC transmembrane type-2 domain in the interval 53 to 280 (VQLIDIVLMP…PLTMRLYRNK (228 aa)). 6 helical membrane-spanning segments follow: residues 58–78 (IVLMPLIFLLMFTYLFGGAFA), 85–105 (LQFYLPGVTVQAVVMMTVYTG), 150–170 (VFLGLLLGFRADGGFLGVVGA), 171–191 (MLVLIVFGFSVSWIFAALGVV), 198–218 (VSGTSMIVLYPLLFMSNIFVM), and 252–272 (FWDVGLVLCVSAGLVAVFAPL).

This sequence belongs to the ABC-2 integral membrane protein family. The complex is probably composed of two ATP-binding proteins (DrrA1) and two transmembrane proteins (DrrB1).

It is found in the cell membrane. Functionally, part of the ABC transporter complex DrrA1B1 involved in daunorubicin efflux. Responsible for the translocation of the substrate across the membrane. Confers self-resistance to daunorubicin, an antibiotic produced by S.coeruleorubidus. The chain is Daunorubicin resistance ABC transporter permease protein DrrB1 from Streptomyces coeruleorubidus.